Reading from the N-terminus, the 356-residue chain is UDP-N-acetylglucosamine--N-acetylmuramyl-(pentapeptide) pyrophosphoryl-undecaprenol N-acetylglucosamine transferase (356 aa).

Residues 12–14 (TGG), Asn124, Arg163, Ser188, Ile242, and Gln287 each bind UDP-N-acetyl-alpha-D-glucosamine.

This sequence belongs to the glycosyltransferase 28 family. MurG subfamily.

It localises to the cell inner membrane. It carries out the reaction di-trans,octa-cis-undecaprenyl diphospho-N-acetyl-alpha-D-muramoyl-L-alanyl-D-glutamyl-meso-2,6-diaminopimeloyl-D-alanyl-D-alanine + UDP-N-acetyl-alpha-D-glucosamine = di-trans,octa-cis-undecaprenyl diphospho-[N-acetyl-alpha-D-glucosaminyl-(1-&gt;4)]-N-acetyl-alpha-D-muramoyl-L-alanyl-D-glutamyl-meso-2,6-diaminopimeloyl-D-alanyl-D-alanine + UDP + H(+). It participates in cell wall biogenesis; peptidoglycan biosynthesis. In terms of biological role, cell wall formation. Catalyzes the transfer of a GlcNAc subunit on undecaprenyl-pyrophosphoryl-MurNAc-pentapeptide (lipid intermediate I) to form undecaprenyl-pyrophosphoryl-MurNAc-(pentapeptide)GlcNAc (lipid intermediate II). This is UDP-N-acetylglucosamine--N-acetylmuramyl-(pentapeptide) pyrophosphoryl-undecaprenol N-acetylglucosamine transferase from Pseudomonas savastanoi pv. phaseolicola (strain 1448A / Race 6) (Pseudomonas syringae pv. phaseolicola (strain 1448A / Race 6)).